The following is a 178-amino-acid chain: CASP-like protein 5B1 (178 aa).

Residues 1–37 lie on the Cytoplasmic side of the membrane; it reads MDASNPIVHPIGDHHAVDLEEGPLIVTMKELPGMPGT. A helical membrane pass occupies residues 38–58; it reads IGGLALRVGQFLFAAAAIVIM. Topologically, residues 59 to 69 are extracellular; sequence VTGDEFTNYTA. Asparagine 66 carries N-linked (GlcNAc...) asparagine glycosylation. A helical membrane pass occupies residues 70 to 90; sequence FCYLVAAMSLQFLWSFMLAIL. The Cytoplasmic segment spans residues 91–104; the sequence is DTYALLIKRGLRNS. The chain crosses the membrane as a helical span at residues 105-125; that stretch reads VLLSLFVVGDWVTATLSLAAA. Over 126 to 154 the chain is Extracellular; it reads CSTAGVTVLFDNDLNYCGQMHCHRYQLSA. A helical membrane pass occupies residues 155 to 175; sequence AMAFLSWLLIGMSSLLTFWLW. Residues 176–178 lie on the Cytoplasmic side of the membrane; the sequence is ASE.

This sequence belongs to the Casparian strip membrane proteins (CASP) family. Homodimer and heterodimers.

The protein localises to the cell membrane. The polypeptide is CASP-like protein 5B1 (Ginkgo biloba (Ginkgo)).